We begin with the raw amino-acid sequence, 249 residues long: 5'-nucleotidase SurE (249 aa).

A divalent metal cation-binding residues include D8, D9, S39, and N91.

This sequence belongs to the SurE nucleotidase family. A divalent metal cation is required as a cofactor.

The protein resides in the cytoplasm. It catalyses the reaction a ribonucleoside 5'-phosphate + H2O = a ribonucleoside + phosphate. Functionally, nucleotidase that shows phosphatase activity on nucleoside 5'-monophosphates. The chain is 5'-nucleotidase SurE from Pseudomonas aeruginosa (strain UCBPP-PA14).